The chain runs to 1169 residues: DNA-directed RNA polymerase subunit beta (1169 aa).

It belongs to the RNA polymerase beta chain family. As to quaternary structure, the RNAP catalytic core consists of 2 alpha, 1 beta, 1 beta' and 1 omega subunit. When a sigma factor is associated with the core the holoenzyme is formed, which can initiate transcription. Interacts with RbpA, which partially restores Rif-inhibited transcription.

The enzyme catalyses RNA(n) + a ribonucleoside 5'-triphosphate = RNA(n+1) + diphosphate. Functionally, DNA-dependent RNA polymerase catalyzes the transcription of DNA into RNA using the four ribonucleoside triphosphates as substrates. This subunit often mutates to generate rifampicin (Rif) resistance. Interaction with RbpA partially restores Rif-inhibited transcription; once the subunit is Rif-resistant however RbpA no longer stimulates transcription. This chain is DNA-directed RNA polymerase subunit beta, found in Mycolicibacterium smegmatis (strain ATCC 700084 / mc(2)155) (Mycobacterium smegmatis).